The chain runs to 99 residues: NAD(P)H-quinone oxidoreductase subunit 4L, chloroplastic (99 aa).

Helical transmembrane passes span 1-21, 31-51, and 59-79; these read MFEQ…FGLI, MSLE…SNLF, and IFTL…LAIA.

It belongs to the complex I subunit 4L family. As to quaternary structure, NDH is composed of at least 16 different subunits, 5 of which are encoded in the nucleus.

The protein resides in the plastid. It localises to the chloroplast thylakoid membrane. It carries out the reaction a plastoquinone + NADH + (n+1) H(+)(in) = a plastoquinol + NAD(+) + n H(+)(out). It catalyses the reaction a plastoquinone + NADPH + (n+1) H(+)(in) = a plastoquinol + NADP(+) + n H(+)(out). Its function is as follows. NDH shuttles electrons from NAD(P)H:plastoquinone, via FMN and iron-sulfur (Fe-S) centers, to quinones in the photosynthetic chain and possibly in a chloroplast respiratory chain. The immediate electron acceptor for the enzyme in this species is believed to be plastoquinone. Couples the redox reaction to proton translocation, and thus conserves the redox energy in a proton gradient. The protein is NAD(P)H-quinone oxidoreductase subunit 4L, chloroplastic of Adiantum capillus-veneris (Maidenhair fern).